Here is a 458-residue protein sequence, read N- to C-terminus: Tetratricopeptide repeat protein 23-like (458 aa).

Coiled-coil stretches lie at residues 175 to 198 (GKQAYIHLQKAERNMKELKELNNG) and 246 to 278 (TSELISLYEEIAQIEQLRKNHKQAIQYLQQAYS).

The protein localises to the cytoplasm. Its subcellular location is the cytoskeleton. The protein resides in the microtubule organizing center. It is found in the centrosome. It localises to the spindle. The protein localises to the midbody. This chain is Tetratricopeptide repeat protein 23-like (Ttc23l), found in Mus musculus (Mouse).